The following is a 63-amino-acid chain: Trypsin inhibitor 5 (63 aa).

Residues 1-21 (MASVAESSGVVEVIELISDGG) form the signal peptide. Positions 22–34 (NDLPRKIMSGRHG) are excised as a propeptide. 3 cysteine pairs are disulfide-bonded: Cys37/Cys54, Cys44/Cys56, and Cys50/Cys62.

Belongs to the protease inhibitor I7 (squash-type serine protease inhibitor) family.

Its subcellular location is the secreted. Functionally, inhibits trypsin. In Luffa aegyptiaca (Sponge gourd), this protein is Trypsin inhibitor 5.